Consider the following 2214-residue polypeptide: MATRSSRRESRLPFLFTLVALLPPGALCEVWTQRLHGGSAPLPQDRGFLVVQGDPRELRLWARGDARGASRADEKPLRRKRSAALQPEPIKVYGQVSLNDSHNQMVVHWAGEKSNVIVALARDSLALARPKSSDVYVSYDYGKSFKKISDKLNFGLGNRSEAVIAQFYHSPADNKRYIFADAYAQYLWITFDFCNTLQGFSIPFRAADLLLHSKASNLLLGFDRSHPNKQLWKSDDFGQTWIMIQEHVKSFSWGIDPYDKPNTIYIERHEPSGYSTVFRSTDFFQSRENQEVILEEVRDFQLRDKYMFATKVVHLLGSEQQSSVQLWVSFGRKPMRAAQFVTRHPINEYYIADASEDQVFVCVSHSNNRTNLYISEAEGLKFSLSLENVLYYSPGGAGSDTLVRYFANEPFADFHRVEGLQGVYIATLINGSMNEENMRSVITFDKGGTWEFLQAPAFTGYGEKINCELSQGCSLHLAQRLSQLLNLQLRRMPILSKESAPGLIIATGSVGKNLASKTNVYISSSAGARWREALPGPHYYTWGDHGGIITAIAQGMETNELKYSTNEGETWKTFIFSEKPVFVYGLLTEPGEKSTVFTIFGSNKENVHSWLILQVNATDALGVPCTENDYKLWSPSDERGNECLLGHKTVFKRRTPHATCFNGEDFDRPVVVSNCSCTREDYECDFGFKMSEDLSLEVCVPDPEFSGKSYSPPVPCPVGSTYRRTRGYRKISGDTCSGGDVEARLEGELVPCPLAEENEFILYAVRKSIYRYDLASGATEQLPLTGLRAAVALDFDYEHNCLYWSDLALDVIQRLCLNGSTGQEVIINSGLETVEALAFEPLSQLLYWVDAGFKKIEVANPDGDFRLTIVNSSVLDRPRALVLVPQEGVMFWTDWGDLKPGIYRSNMDGSAAYHLVSEDVKWPNGISVDDQWIYWTDAYLECIERITFSGQQRSVILDNLPHPYAIAVFKNEIYWDDWSQLSIFRASKYSGSQMEILANQLTGLMDMKIFYKGKNTGSNACVPRPCSLLCLPKANNSRSCRCPEDVSSSVLPSGDLMCDCPQGYQLKNNTCVKQENTCLRNQYRCSNGNCINSIWWCDFDNDCGDMSDERNCPTTICDLDTQFRCQESGTCIPLSYKCDLEDDCGDNSDESHCEMHQCRSDEYNCSSGMCIRSSWVCDGDNDCRDWSDEANCTAIYHTCEASNFQCRNGHCIPQRWACDGDTDCQDGSDEDPVNCEKKCNGFRCPNGTCIPSSKHCDGLRDCSDGSDEQHCEPLCTHFMDFVCKNRQQCLFHSMVCDGIIQCRDGSDEDAAFAGCSQDPEFHKVCDEFGFQCQNGVCISLIWKCDGMDDCGDYSDEANCENPTEAPNCSRYFQFRCENGHCIPNRWKCDRENDCGDWSDEKDCGDSHILPFSTPGPSTCLPNYYRCSSGTCVMDTWVCDGYRDCADGSDEEACPLLANVTAASTPTQLGRCDRFEFECHQPKTCIPNWKRCDGHQDCQDGRDEANCPTHSTLTCMSREFQCEDGEACIVLSERCDGFLDCSDESDEKACSDELTVYKVQNLQWTADFSGDVTLTWMRPKKMPSASCVYNVYYRVVGESIWKTLETHSNKTNTVLKVLKPDTTYQVKVQVQCLSKAHNTNDFVTLRTPEGLPDAPRNLQLSLPREAEGVIVGHWAPPIHTHGLIREYIVEYSRSGSKMWASQRAASNFTEIKNLLVNTLYTVRVAAVTSRGIGNWSDSKSITTIKGKVIPPPDIHIDSYGENYLSFTLTMESDIKVNGYVVNLFWAFDTHKQERRTLNFRGSILSHKVGNLTAHTSYEISAWAKTDLGDSPLAFEHVMTRGVRPPAPSLKAKAINQTAVECTWTGPRNVVYGIFYATSFLDLYRNPKSLTTSLHNKTVIVSKDEQYLFLVRVVVPYQGPSSDYVVVKMIPDSRLPPRHLHVVHTGKTSVVIKWESPYDSPDQDLLYAVAVKDLIRKTDRSYKVKSRNSTVEYTLNKLEPGGKYHIIVQLGNMSKDSSIKITTVSLSAPDALKIITENDHVLLFWKSLALKEKHFNESRGYEIHMFDSAMNITAYLGNTTDNFFKISNLKMGHNYTFTVQARCLFGNQICGEPAILLYDELGSGADASATQAARSTDVAAVVVPILFLILLSLGVGFAILYTKHRRLQSSFTAFANSHYSSRLGSAIFSSGDDLGEDDEDAPMITGFSDDVPMVIA.

The N-terminal stretch at 1–28 (MATRSSRRESRLPFLFTLVALLPPGALC) is a signal peptide. The propeptide at 29–81 (EVWTQRLHGGSAPLPQDRGFLVVQGDPRELRLWARGDARGASRADEKPLRRKR) is removed in mature form. The short motif at 63–65 (RGD) is the Cell attachment site element. Residues 82–2137 (SAALQPEPIK…TQAARSTDVA (2056 aa)) lie on the Lumenal side of the membrane. Residue Asn99 is glycosylated (N-linked (GlcNAc...) asparagine). A Phosphoserine modification is found at Ser114. Residues 136-147 (YVSYDYGKSFKK) form a BNR 1 repeat. N-linked (GlcNAc...) asparagine glycosylation is present at Asn158. A BNR 2 repeat occupies 232 to 243 (WKSDDFGQTWIM). N-linked (GlcNAc...) asparagine glycosylation is found at Asn368 and Asn430. 3 BNR repeats span residues 441–452 (VITFDKGGTWEF), 521–532 (YISSSAGARWRE), and 562–573 (KYSTNEGETWKT). N-linked (GlcNAc...) asparagine glycans are attached at residues Asn616, Asn674, Asn818, and Asn871. LDL-receptor class B repeat units lie at residues 800 to 843 (NCLY…EPLS), 844 to 887 (QLLY…VPQE), 888 to 932 (GVMF…DDQW), 933 to 970 (IYWT…AVFK), and 971 to 1013 (NEIY…FYKG). The EGF-like domain occupies 1026–1072 (CSLLCLPKANNSRSCRCPEDVSSSVLPSGDLMCDCPQGYQLKNNTCV). Asn1035 and Asn1068 each carry an N-linked (GlcNAc...) asparagine glycan. 9 LDL-receptor class A domains span residues 1076-1114 (NTCL…NCPT), 1115-1155 (TICD…HCEM), 1156-1194 (HQCR…NCTA), 1198-1236 (TCEA…VNCE), 1238-1272 (KCNG…QHCE), 1273-1317 (PLCT…GCSQ), 1323-1361 (KVCD…NCEN), 1366-1405 (PNCS…DCGD), and 1417-1455 (STCL…ACPL). 21 disulfide bridges follow: Cys1078–Cys1090, Cys1085–Cys1103, Cys1097–Cys1112, Cys1117–Cys1131, Cys1125–Cys1144, Cys1138–Cys1153, Cys1158–Cys1170, Cys1165–Cys1183, Cys1177–Cys1192, Cys1199–Cys1211, Cys1206–Cys1224, Cys1218–Cys1235, Cys1239–Cys1249, Cys1244–Cys1262, Cys1256–Cys1271, Cys1275–Cys1289, Cys1283–Cys1302, Cys1296–Cys1315, Cys1325–Cys1337, Cys1332–Cys1350, and Cys1344–Cys1359. Asn1164 is a glycosylation site (N-linked (GlcNAc...) asparagine). Asn1191 carries an N-linked (GlcNAc...) asparagine glycan. Residue Asn1246 is glycosylated (N-linked (GlcNAc...) asparagine). An N-linked (GlcNAc...) asparagine glycan is attached at Asn1367. 6 disulfide bridges follow: Cys1368-Cys1381, Cys1376-Cys1394, Cys1388-Cys1403, Cys1419-Cys1431, Cys1426-Cys1444, and Cys1438-Cys1453. Asn1458 carries N-linked (GlcNAc...) asparagine glycosylation. 2 LDL-receptor class A domains span residues 1469–1508 (GRCD…NCPT) and 1512–1551 (LTCM…ACSD). 6 disulfide bridges follow: Cys1471/Cys1484, Cys1478/Cys1497, Cys1491/Cys1506, Cys1514/Cys1527, Cys1521/Cys1540, and Cys1534/Cys1549. 6 Fibronectin type-III domains span residues 1557-1649 (KVQN…TPEG), 1653-1745 (APRN…TIKG), 1749-1844 (PPPD…VRPP), 1843-1927 (PPAP…VVKM), 1934-2029 (PPRH…APDA), and 2030-2118 (LKII…LYDE). N-linked (GlcNAc...) asparagine glycans are attached at residues Asn1608, Asn1706, Asn1733, Asn1809, Asn1854, Asn1894, Asn1986, Asn2010, Asn2054, Asn2069, Asn2076, and Asn2092. Residues 2138–2158 (AVVVPILFLILLSLGVGFAIL) traverse the membrane as a helical segment. The Cytoplasmic portion of the chain corresponds to 2159 to 2214 (YTKHRRLQSSFTAFANSHYSSRLGSAIFSSGDDLGEDDEDAPMITGFSDDVPMVIA). Positions 2161-2164 (KHRR) match the Potential nuclear localization signal for the C-terminal fragment generated by PSEN1 motif. An Endocytosis signal motif is present at residues 2172–2177 (FANSHY). The interval 2190–2214 (DDLGEDDEDAPMITGFSDDVPMVIA) is required for efficient Golgi apparatus - endosome sorting. The required for interaction with GGA1 and GGA2 stretch occupies residues 2201-2214 (MITGFSDDVPMVIA). Phosphoserine; by ROCK2 is present on Ser2206. Residues 2208–2212 (DVPMV) carry the DXXLL motif involved in the interaction with GGA1 motif.

Belongs to the VPS10-related sortilin family. SORL1 subfamily. As to quaternary structure, after maturation cleavage, interacts (via N-terminus) with its own propeptide; this interaction prevents interaction with other ligands, including CRLF1, GDNF, GFRA1, IL6 and IL6R. Interacts (via N-terminal ectodomain) with APP, forming a 1:1 stoichiometric complex, including with isoforms APP695, APP751 and APP770; this interaction retains APP in the trans-Golgi network and reduces processing into soluble APP-alpha and amyloid-beta peptides. Also interacts with APP C-terminal fragment C99 and with Abeta40. Interacts with beta-secretase BACE1/BACE; this interaction may affect BACE1-binding to APP and hence reduce BACE1-dependent APP cleavage. Interacts with LRPAP1/RAP. Interacts (via C-terminal cytosolic domain) with GGA1 and GGA2 (via N-terminal VHS domain). Interacts with PACS1. May interact (via the N-terminal ectodomain) with the morphogenetic neuropeptide, also called head activator or HA; this interaction is impaired in the presence of propeptide. Interacts with neurotensin/NTS. Interacts (via the N-terminal ectodomain) with PDGFB homodimer. Interacts (via N-terminal ectodomain) with the uPA receptor PLAUR; this interaction decreases PLAUR internalization. Interacts (via N-terminal ectodomain) with uPA/PLAU and PAI1/SERPINE1, either individually or in complex with each other, leading to endocytosis; this interaction is abolished in the presence of LRPAP1. Also interacts with the ternary complex composed of PLAUR-PLAU-PAI1. Also interacts with tPA/PLAT either alone or in complex with SERPINE1. Interacts (via C-terminus) with AP-1 and AP-2 complexes. Interacts with BMPR1A and BMPR1B. Interacts with lipoprotein lipase LPL; this interaction is optimal in slightly acidic conditions. Interacts (via N-terminal ectodomain) with GDNF (via propeptide) and GDNF receptor alpha-1/GFRA1, either individually or in complex with each other. The interaction with GDNF occurs mostly intracellularly. Also interacts with other GDNF receptor alpha family members, including GFRA2, GFRA3 and GFRA4. Interacts with the insulin receptor INSR; this interaction strongly increases the surface exposure of INSR. Interacts (via cytosolic C-terminus) with STK39/SPAK. Interacts (via N-terminal ectodomain) with the heterodimeric complex CRLF1-CLC; within this complex, the interaction is mediated predominantly by the CRLF1 moiety. Interacts with CNTFR, as well as with the tripartite signaling complex formed by CRLF1, CLC and CNTFR. Interacts (via N-terminal ectodomain) with IL6; this interaction leads to IL6 internalization and lysosomal degradation. Binding of SOLRL1 secreted N-terminal ectodomain to IL6 may increase IL6 trans signaling. Interacts with secreted IL6R; this interaction leads to IL6R internalization. Also interacts with transmembrane IL6R; this interaction does not affect IL6R subcellular location. Interacts with APOE. Interacts with apolipoprotein E-rich beta-VLDL. Interacts with APOA5; this interaction leads to APOA5 internalization and is abolished by heparin. Interaction with APOA5 results in enhanced binding to chylomicrons. Interacts with ROCK2. Interacts (via cytosolic C-terminus) with PPP3CB/calcineurin A beta. Interacts with NTRK2/TRKB; this interaction facilitates NTRK2 trafficking between synaptic plasma membranes, postsynaptic densities and cell soma, hence positively regulates BDNF signaling. Interacts (via cytosolic C-terminus) with HSPA12A in an ADP-dependent manner; this interaction affects SORL1 internalization and subcellular localization. Interacts (via N-terminal ectodomain) with ERBB2/HER2. In terms of processing, within the Golgi apparatus, the propeptide may be cleaved off by FURIN or a furin-like protease. After cleavage, the propeptide interacts with the mature protein N-terminus, preventing the association with other ligands. At the cell surface, partially subjected to proteolytic shedding that releases the ectodomain in the extracellular milieu. The shedding may be catalyzed by ADAM17/TACE. Following shedding, PSEN1/presenilin-1 cleaves the remaining transmembrane fragment and catalyzes the release of a C-terminal fragment in the cytosol and of a soluble N-terminal beta fragment in the extracellular milieu. The C-terminal cytosolic fragment localizes to the nucleus. Phosphorylation at Ser-2206 facilitates the interaction with GGA1. In terms of tissue distribution, highly expressed in brain (at protein level). Most abundant in the cerebellum, cerebral cortex and occipital pole; low levels in the putamen and thalamus. Expression is significantly reduced in the frontal cortex of patients suffering from Alzheimer disease. Also expressed in spinal cord, spleen, testis, prostate, ovary, thyroid and lymph nodes.

It localises to the golgi apparatus membrane. The protein localises to the golgi apparatus. It is found in the trans-Golgi network membrane. The protein resides in the endosome membrane. Its subcellular location is the early endosome membrane. It localises to the recycling endosome membrane. The protein localises to the endoplasmic reticulum membrane. It is found in the endosome. The protein resides in the multivesicular body membrane. Its subcellular location is the cell membrane. It localises to the cytoplasmic vesicle. The protein localises to the secretory vesicle membrane. It is found in the secreted. In terms of biological role, sorting receptor that directs several proteins to their correct location within the cell. Along with AP-1 complex, involved Golgi apparatus - endosome sorting. Sorting receptor for APP, regulating its intracellular trafficking and processing into amyloidogenic-beta peptides. Retains APP in the trans-Golgi network, hence preventing its transit through late endosomes where amyloid beta peptides Abeta40 and Abeta42 are generated. May also sort newly produced amyloid-beta peptides to lysosomes for catabolism. Does not affect APP trafficking from the endoplasmic reticulum to Golgi compartments. Sorting receptor for the BDNF receptor NTRK2/TRKB that facilitates NTRK2 trafficking between synaptic plasma membranes, postsynaptic densities and cell soma, hence positively regulates BDNF signaling by controlling the intracellular location of its receptor. Sorting receptor for GDNF that promotes GDNF regulated, but not constitutive secretion. Sorting receptor for the GDNF-GFRA1 complex, directing it from the cell surface to endosomes. GDNF is then targeted to lysosomes and degraded, while its receptor GFRA1 recycles back to the cell membrane, resulting in a GDNF clearance pathway. The SORL1-GFRA1 complex further targets RET for endocytosis, but not for degradation, affecting GDNF-induced neurotrophic activities. Sorting receptor for ERBB2/HER2. Regulates ERBB2 subcellular distribution by promoting its recycling after internalization from endosomes back to the plasma membrane, hence stimulating phosphoinositide 3-kinase (PI3K)-dependent ERBB2 signaling. In ERBB2-dependent cancer cells, promotes cell proliferation. Sorting receptor for lipoprotein lipase LPL. Promotes LPL localization to endosomes and later to the lysosomes, leading to degradation of newly synthesized LPL. Potential sorting receptor for APOA5, inducing APOA5 internalization to early endosomes, then to late endosomes, wherefrom a portion is sent to lysosomes and degradation, another portion is sorted to the trans-Golgi network. Sorting receptor for the insulin receptor INSR. Promotes recycling of internalized INSR via the Golgi apparatus back to the cell surface, thereby preventing lysosomal INSR catabolism, increasing INSR cell surface expression and strengthening insulin signal reception in adipose tissue. Does not affect INSR internalization. Plays a role in renal ion homeostasis, controlling the phospho-regulation of SLC12A1/NKCC2 by STK39/SPAK kinase and PPP3CB/calcineurin A beta phosphatase, possibly through intracellular sorting of STK39 and PPP3CB. Stimulates, via the N-terminal ectodomain, the proliferation and migration of smooth muscle cells, possibly by increasing cell surface expression of the urokinase receptor uPAR/PLAUR. This may promote extracellular matrix proteolysis and hence facilitate cell migration. By acting on the migration of intimal smooth muscle cells, may accelerate intimal thickening following vascular injury. Promotes adhesion of monocytes. Stimulates proliferation and migration of monocytes/macrophages. Through its action on intimal smooth muscle cells and macrophages, may accelerate intimal thickening and macrophage foam cell formation in the process of atherosclerosis. Regulates hypoxia-enhanced adhesion of hematopoietic stem and progenitor cells to the bone marrow stromal cells via a PLAUR-mediated pathway. This function is mediated by the N-terminal ectodomain. Metabolic regulator, which functions to maintain the adequate balance between lipid storage and oxidation in response to changing environmental conditions, such as temperature and diet. The N-terminal ectodomain negatively regulates adipose tissue energy expenditure, acting through the inhibition the BMP/Smad pathway. May regulate signaling by the heterodimeric neurotrophic cytokine CLCF1-CRLF1 bound to the CNTFR receptor by promoting the endocytosis of the tripartite complex CLCF1-CRLF1-CNTFR and lysosomal degradation. May regulate IL6 signaling, decreasing cis signaling, possibly by interfering with IL6-binding to membrane-bound IL6R, while up-regulating trans signaling via soluble IL6R. The polypeptide is Sortilin-related receptor (SORL1) (Homo sapiens (Human)).